The sequence spans 348 residues: Sex-lethal homolog (348 aa).

2 RRM domains span residues 110 to 188 (TNLI…YARP) and 196 to 276 (TNLY…LAEE). Positions 296–310 (GGGGGGGGGGGGGMG) are enriched in gly residues. The disordered stretch occupies residues 296–317 (GGGGGGGGGGGGGMGGPPPPPM).

It is found in the nucleus. Functionally, unknown; apparently not involved in somatic sex determination. This Ceratitis capitata (Mediterranean fruit fly) protein is Sex-lethal homolog (SXL).